Consider the following 575-residue polypeptide: Carboxylesterase 5A (575 aa).

An N-terminal signal peptide occupies residues 1–20; it reads MSGNWVHPGQILIWAIWVLA. Cysteine 94 and cysteine 121 are oxidised to a cystine. Serine 226 (acyl-ester intermediate) is an active-site residue. Asparagine 281 carries an N-linked (GlcNAc...) asparagine glycan. Glutamate 345 (charge relay system) is an active-site residue. An N-linked (GlcNAc...) asparagine glycan is attached at asparagine 363. Catalysis depends on histidine 454, which acts as the Charge relay system. Residues asparagine 513 and asparagine 524 are each glycosylated (N-linked (GlcNAc...) asparagine).

It belongs to the type-B carboxylesterase/lipase family. Post-translationally, N-glycosylated.

The protein localises to the secreted. It carries out the reaction a carboxylic ester + H2O = an alcohol + a carboxylate + H(+). Its function is as follows. Involved in the detoxification of xenobiotics and in the activation of ester and amide prodrugs. The protein is Carboxylesterase 5A (CES5A) of Homo sapiens (Human).